The sequence spans 185 residues: HTH-type transcriptional regulator Hpr (185 aa).

Positions 13-157 constitute an HTH marR-type domain; sequence AMIFSQRIAQ…LIAILRNIYG (145 aa). The H-T-H motif DNA-binding region spans 63-86; it reads ISEIAKFGVMHVSTAFNFSKKLEE.

Homodimer.

Functionally, negative regulator of protease production and sporulation. This chain is HTH-type transcriptional regulator Hpr, found in Bacillus cytotoxicus (strain DSM 22905 / CIP 110041 / 391-98 / NVH 391-98).